A 260-amino-acid polypeptide reads, in one-letter code: Thiazole synthase (260 aa).

The Schiff-base intermediate with DXP role is filled by Lys96. Residues Gly157, 184 to 185 (AG), and 206 to 207 (NT) contribute to the 1-deoxy-D-xylulose 5-phosphate site.

It belongs to the ThiG family. In terms of assembly, homotetramer. Forms heterodimers with either ThiH or ThiS.

The protein resides in the cytoplasm. It carries out the reaction [ThiS sulfur-carrier protein]-C-terminal-Gly-aminoethanethioate + 2-iminoacetate + 1-deoxy-D-xylulose 5-phosphate = [ThiS sulfur-carrier protein]-C-terminal Gly-Gly + 2-[(2R,5Z)-2-carboxy-4-methylthiazol-5(2H)-ylidene]ethyl phosphate + 2 H2O + H(+). It functions in the pathway cofactor biosynthesis; thiamine diphosphate biosynthesis. Functionally, catalyzes the rearrangement of 1-deoxy-D-xylulose 5-phosphate (DXP) to produce the thiazole phosphate moiety of thiamine. Sulfur is provided by the thiocarboxylate moiety of the carrier protein ThiS. In vitro, sulfur can be provided by H(2)S. The chain is Thiazole synthase from Rhodopseudomonas palustris (strain BisB18).